The sequence spans 297 residues: Large ribosomal subunit protein uL18 (297 aa).

At glycine 2 the chain carries N-acetylglycine. Lysine 5 and lysine 48 each carry N6-acetyllysine. Serine 185 carries the post-translational modification Phosphoserine. Lysine 220 bears the N6-acetyllysine; alternate mark. Residue lysine 220 forms a Glycyl lysine isopeptide (Lys-Gly) (interchain with G-Cter in SUMO1); alternate linkage. Lysine 220 participates in a covalent cross-link: Glycyl lysine isopeptide (Lys-Gly) (interchain with G-Cter in SUMO2); alternate. Phosphothreonine is present on threonine 232. Residues 252–297 are disordered; the sequence is VYEKKPKKEVKKKRWNRPKMSLAQKKDRVAQKKASFLRAQERAAES. The span at 258 to 268 shows a compositional bias: basic residues; that stretch reads KKEVKKKRWNR. Residue serine 272 is modified to Phosphoserine.

This sequence belongs to the universal ribosomal protein uL18 family. Component of the large ribosomal subunit (LSU). Part of the 5S RNP complex, which is a LSU subcomplex composed of the 5S RNA, RPL5 and RPL11. Component of a hexameric 5S RNP precursor complex, composed of 5S RNA, RRS1, RPF2/BXDC1, RPL5, RPL11 and HEATR3; this complex acts as a precursor for ribosome assembly. Interacts with NVL in an ATP-dependent manner. Interacts with RRP1B. Interacts with IPO5, IPO7 and KPNB1; these interactions may be involved in RPL5 nuclear import for the assembly of ribosomal subunits.

Its subcellular location is the cytoplasm. It is found in the nucleus. The protein localises to the nucleolus. In terms of biological role, component of the ribosome, a large ribonucleoprotein complex responsible for the synthesis of proteins in the cell. The small ribosomal subunit (SSU) binds messenger RNAs (mRNAs) and translates the encoded message by selecting cognate aminoacyl-transfer RNA (tRNA) molecules. The large subunit (LSU) contains the ribosomal catalytic site termed the peptidyl transferase center (PTC), which catalyzes the formation of peptide bonds, thereby polymerizing the amino acids delivered by tRNAs into a polypeptide chain. The nascent polypeptides leave the ribosome through a tunnel in the LSU and interact with protein factors that function in enzymatic processing, targeting, and the membrane insertion of nascent chains at the exit of the ribosomal tunnel. As part of the 5S RNP/5S ribonucleoprotein particle it is an essential component of the LSU, required for its formation and the maturation of rRNAs. It also couples ribosome biogenesis to p53/TP53 activation. As part of the 5S RNP it accumulates in the nucleoplasm and inhibits MDM2, when ribosome biogenesis is perturbed, mediating the stabilization and the activation of TP53. The sequence is that of Large ribosomal subunit protein uL18 (RPL5) from Bos taurus (Bovine).